The primary structure comprises 203 residues: Holliday junction branch migration complex subunit RuvA (203 aa).

A domain I region spans residues 1–64; the sequence is MIGRLRGYIL…EDAQLLYGFN (64 aa). Positions 65–142 are domain II; the sequence is DKQERALFRE…KGLNGDLFNN (78 aa). The interval 143–154 is flexible linker; sequence SSEITLPTAAQA. The segment at 155–203 is domain III; the sequence is AELDAEAEAASALVALGYKPQEASRMVSKIAKPGADCETLIRDALRAAL.

The protein belongs to the RuvA family. Homotetramer. Forms an RuvA(8)-RuvB(12)-Holliday junction (HJ) complex. HJ DNA is sandwiched between 2 RuvA tetramers; dsDNA enters through RuvA and exits via RuvB. An RuvB hexamer assembles on each DNA strand where it exits the tetramer. Each RuvB hexamer is contacted by two RuvA subunits (via domain III) on 2 adjacent RuvB subunits; this complex drives branch migration. In the full resolvosome a probable DNA-RuvA(4)-RuvB(12)-RuvC(2) complex forms which resolves the HJ.

It is found in the cytoplasm. In terms of biological role, the RuvA-RuvB-RuvC complex processes Holliday junction (HJ) DNA during genetic recombination and DNA repair, while the RuvA-RuvB complex plays an important role in the rescue of blocked DNA replication forks via replication fork reversal (RFR). RuvA specifically binds to HJ cruciform DNA, conferring on it an open structure. The RuvB hexamer acts as an ATP-dependent pump, pulling dsDNA into and through the RuvAB complex. HJ branch migration allows RuvC to scan DNA until it finds its consensus sequence, where it cleaves and resolves the cruciform DNA. In Serratia proteamaculans (strain 568), this protein is Holliday junction branch migration complex subunit RuvA.